The chain runs to 353 residues: Photosystem II protein D1 (353 aa).

N-acetylthreonine is present on Thr2. Thr2 bears the Phosphothreonine mark. The next 3 helical transmembrane spans lie at 29–46 (YIGWFGVLMIPTLLTATS), 118–133 (HFLLGVACYMGREWEL), and 142–156 (WIAVAYSAPVAAATA). His118 contributes to the chlorophyll a binding site. Tyr126 serves as a coordination point for pheophytin a. Residues Asp170 and Glu189 each coordinate [CaMn4O5] cluster. The chain crosses the membrane as a helical span at residues 197–218 (FHMLGVAGVFGGSLFSAMHGSL). His198 contributes to the chlorophyll a binding site. A quinone is bound by residues His215 and 264-265 (SF). His215 is a Fe cation binding site. His272 serves as a coordination point for Fe cation. A helical transmembrane segment spans residues 274–288 (FLTAWPVVGIWFTAL). 4 residues coordinate [CaMn4O5] cluster: His332, Glu333, Asp342, and Ala344. Positions 345 to 353 (AVEAPSTNG) are excised as a propeptide.

It belongs to the reaction center PufL/M/PsbA/D family. In terms of assembly, PSII is composed of 1 copy each of membrane proteins PsbA, PsbB, PsbC, PsbD, PsbE, PsbF, PsbH, PsbI, PsbJ, PsbK, PsbL, PsbM, PsbT, PsbX, PsbY, PsbZ, Psb30/Ycf12, at least 3 peripheral proteins of the oxygen-evolving complex and a large number of cofactors. It forms dimeric complexes. Requires The D1/D2 heterodimer binds P680, chlorophylls that are the primary electron donor of PSII, and subsequent electron acceptors. It shares a non-heme iron and each subunit binds pheophytin, quinone, additional chlorophylls, carotenoids and lipids. D1 provides most of the ligands for the Mn4-Ca-O5 cluster of the oxygen-evolving complex (OEC). There is also a Cl(-1) ion associated with D1 and D2, which is required for oxygen evolution. The PSII complex binds additional chlorophylls, carotenoids and specific lipids. as cofactor. Post-translationally, tyr-161 forms a radical intermediate that is referred to as redox-active TyrZ, YZ or Y-Z. C-terminally processed by CTPA; processing is essential to allow assembly of the oxygen-evolving complex and thus photosynthetic growth.

The protein localises to the plastid. It is found in the chloroplast thylakoid membrane. The enzyme catalyses 2 a plastoquinone + 4 hnu + 2 H2O = 2 a plastoquinol + O2. Its function is as follows. Photosystem II (PSII) is a light-driven water:plastoquinone oxidoreductase that uses light energy to abstract electrons from H(2)O, generating O(2) and a proton gradient subsequently used for ATP formation. It consists of a core antenna complex that captures photons, and an electron transfer chain that converts photonic excitation into a charge separation. The D1/D2 (PsbA/PsbD) reaction center heterodimer binds P680, the primary electron donor of PSII as well as several subsequent electron acceptors. The protein is Photosystem II protein D1 of Barbarea verna (Land cress).